Here is a 398-residue protein sequence, read N- to C-terminus: Glutamyl-tRNA reductase (398 aa).

Substrate-binding positions include 45–48 (TCNR), serine 88, 93–95 (EDQ), and glutamine 99. The active-site Nucleophile is the cysteine 46. 168-173 (GAGKMG) provides a ligand contact to NADP(+).

The protein belongs to the glutamyl-tRNA reductase family. In terms of assembly, homodimer.

The catalysed reaction is (S)-4-amino-5-oxopentanoate + tRNA(Glu) + NADP(+) = L-glutamyl-tRNA(Glu) + NADPH + H(+). It participates in porphyrin-containing compound metabolism; protoporphyrin-IX biosynthesis; 5-aminolevulinate from L-glutamyl-tRNA(Glu): step 1/2. In terms of biological role, catalyzes the NADPH-dependent reduction of glutamyl-tRNA(Glu) to glutamate 1-semialdehyde (GSA). The protein is Glutamyl-tRNA reductase (hemA) of Methanothermobacter marburgensis (strain ATCC BAA-927 / DSM 2133 / JCM 14651 / NBRC 100331 / OCM 82 / Marburg) (Methanobacterium thermoautotrophicum).